The primary structure comprises 404 residues: Retrotransposable element SLACS 45 kDa protein (404 aa).

Composition is skewed to polar residues over residues 1 to 11 and 29 to 41; these read MVRNLRSSEPQ and PALN…QKQV. Disordered regions lie at residues 1–62, 86–111, 134–251, 317–341, and 369–404; these read MVRN…NTSI, KKAA…GRPP, LGKG…KKGA, CRQQ…GAVS, and PKLP…AGPP. Basic and acidic residues predominate over residues 98 to 111; it reads VNKEGNRKKYGRPP. The span at 141–151 shows a compositional bias: polar residues; it reads TAHTKSNQSRV. A C2H2-type zinc finger spans residues 300–321; that stretch reads CPVCGFAHPEETITVTHCRQQH. Positions 395–404 are enriched in basic and acidic residues; it reads HHCDRSAGPP.

In Trypanosoma brucei gambiense, this protein is Retrotransposable element SLACS 45 kDa protein.